A 29-amino-acid polypeptide reads, in one-letter code: Dermaseptin-J8 (29 aa).

Expressed by the skin glands.

It localises to the secreted. Functionally, has antimicrobial activity. The chain is Dermaseptin-J8 from Phasmahyla jandaia (Jandaia leaf frog).